The chain runs to 540 residues: Chaperonin GroEL 2 (540 aa).

ATP-binding positions include 29–32, 86–90, G413, and D492; these read TLGP and DGTTT. The tract at residues 521-540 is disordered; the sequence is KPEKEKASVPGGGDMGGMDF. A compositionally biased stretch (gly residues) spans 530–540; the sequence is PGGGDMGGMDF.

This sequence belongs to the chaperonin (HSP60) family. In terms of assembly, forms a cylinder of 14 subunits composed of two heptameric rings stacked back-to-back. Interacts with the co-chaperonin GroES.

The protein resides in the secreted. It localises to the capsule. It is found in the cell surface. Its subcellular location is the cell wall. It carries out the reaction ATP + H2O + a folded polypeptide = ADP + phosphate + an unfolded polypeptide.. In terms of biological role, together with its co-chaperonin GroES, plays an essential role in assisting protein folding. The GroEL-GroES system forms a nano-cage that allows encapsulation of the non-native substrate proteins and provides a physical environment optimized to promote and accelerate protein folding. The chain is Chaperonin GroEL 2 from Mycobacterium tuberculosis (strain ATCC 25177 / H37Ra).